The chain runs to 102 residues: Large ribosomal subunit protein bL21 (102 aa).

This sequence belongs to the bacterial ribosomal protein bL21 family. As to quaternary structure, part of the 50S ribosomal subunit. Contacts protein L20.

This protein binds to 23S rRNA in the presence of protein L20. This chain is Large ribosomal subunit protein bL21, found in Lachnospira eligens (strain ATCC 27750 / DSM 3376 / VPI C15-48 / C15-B4) (Eubacterium eligens).